The primary structure comprises 102 residues: Small ribosomal subunit protein uS10 (102 aa).

This sequence belongs to the universal ribosomal protein uS10 family. Part of the 30S ribosomal subunit.

In terms of biological role, involved in the binding of tRNA to the ribosomes. In Saccharolobus islandicus (strain M.16.4 / Kamchatka #3) (Sulfolobus islandicus), this protein is Small ribosomal subunit protein uS10.